The following is a 695-amino-acid chain: G-patch and R3H domain-containing protein C30B4.02c (695 aa).

Disordered stretches follow at residues 168 to 200 (SDKE…NDDS), 213 to 242 (DIAN…EFDI), 257 to 317 (FADL…FDEG), 332 to 351 (GNTD…DEDE), 388 to 448 (DSED…VAAR), and 475 to 517 (DKSK…DSDN). Basic and acidic residues predominate over residues 182 to 198 (CYKEQESEKELYSKDND). Acidic residues-rich tracts occupy residues 262-286 (VLEE…EEEE), 307-317 (EDSESLEFDEG), and 337-351 (LAED…DEDE). Positions 421 to 434 (KKDRKLPKKMRKAQ) are enriched in basic residues. Positions 525-587 (KIFINDVYQR…KRYTMLSKTH (63 aa)) constitute an R3H domain. The G-patch domain occupies 652-695 (KENPGRRLLEKLGWYAGKGLGHPENEGSKDSLRAIVKVSRSGLG).

Its subcellular location is the cytoplasm. The chain is G-patch and R3H domain-containing protein C30B4.02c from Schizosaccharomyces pombe (strain 972 / ATCC 24843) (Fission yeast).